The chain runs to 177 residues: Parathyroid hormone-related protein (177 aa).

Residues 1–24 form the signal peptide; the sequence is MLRRLVQQWSVAVFLLSYSVPSCG. The propeptide occupies 25 to 34; it reads RSVEGPGRRL. The interval 57–68 is important for receptor binding; that stretch reads RFFLHHLIAEIH. The tract at residues 74–177 is disordered; sequence ATSEVSPNSK…PEPELDSRRH (104 aa). A compositionally biased stretch (polar residues) spans 76-90; that stretch reads SEVSPNSKPAANTKN. Residues 108-129 carry the Nuclear localization signal motif; that stretch reads TNKVEPYKEQPLKTPGKKKKGK. Residues 109–118 show a composition bias toward basic and acidic residues; that stretch reads NKVEPYKEQP. Residues 122 to 132 show a composition bias toward basic residues; that stretch reads PGKKKKGKPGK.

The protein belongs to the parathyroid hormone family. As to quaternary structure, PTHrP interacts with PTH1R (via N-terminal extracellular domain). In terms of processing, there are several secretory forms, including osteostatin, arising from endoproteolytic cleavage of the initial translation product. Each of these secretory forms is believed to have one or more of its own receptors that mediates the normal paracrine, autocrine and endocrine actions.

Its subcellular location is the secreted. The protein resides in the cytoplasm. The protein localises to the nucleus. Functionally, neuroendocrine peptide which is a critical regulator of cellular and organ growth, development, migration, differentiation and survival and of epithelial calcium ion transport. Acts by binding to its receptor, PTH1R, activating G protein-coupled receptor signaling. Regulates endochondral bone development and epithelial-mesenchymal interactions during the formation of the mammary glands and teeth. Required for skeletal homeostasis. Promotes mammary mesenchyme differentiation and bud outgrowth by modulating mesenchymal cell responsiveness to BMPs. Up-regulates BMPR1A expression in the mammary mesenchyme and this increases the sensitivity of these cells to BMPs and allows them to respond to BMP4 in a paracrine and/or autocrine fashion. BMP4 signaling in the mesenchyme, in turn, triggers epithelial outgrowth and augments MSX2 expression, which causes the mammary mesenchyme to inhibit hair follicle formation within the nipple sheath. In terms of biological role, potent inhibitor of osteoclastic bone resorption. The sequence is that of Parathyroid hormone-related protein (PTHLH) from Oryctolagus cuniculus (Rabbit).